The following is a 61-amino-acid chain: Weak toxin CM-2a (61 aa).

Cystine bridges form between C3/C19, C12/C37, C41/C49, and C50/C55.

Belongs to the three-finger toxin family. Short-chain subfamily. Orphan group XX sub-subfamily. In terms of tissue distribution, expressed by the venom gland.

It localises to the secreted. This is Weak toxin CM-2a from Naja annulifera (Banded Egyptian cobra).